Here is a 92-residue protein sequence, read N- to C-terminus: Small nuclear ribonucleoprotein E (92 aa).

Residues 18 to 92 (INLIFRYLQN…NITLLQSVSN (75 aa)) form the Sm domain.

This sequence belongs to the snRNP Sm proteins family. In terms of assembly, core component of the spliceosomal U1, U2, U4 and U5 small nuclear ribonucleoproteins (snRNPs), the building blocks of the spliceosome. Most spliceosomal snRNPs contain a common set of Sm proteins, SNRPB, SNRPD1, SNRPD2, SNRPD3, SNRPE, SNRPF and SNRPG that assemble in a heptameric protein ring on the Sm site of the small nuclear RNA to form the core snRNP. Component of the U1 snRNP. The U1 snRNP is composed of the U1 snRNA and the 7 core Sm proteins SNRPB, SNRPD1, SNRPD2, SNRPD3, SNRPE, SNRPF and SNRPG, and at least three U1 snRNP-specific proteins SNRNP70/U1-70K, SNRPA/U1-A and SNRPC/U1-C. Component of the U4/U6-U5 tri-snRNP complex composed of the U4, U6 and U5 snRNAs and at least PRPF3, PRPF4, PRPF6, PRPF8, PRPF31, SNRNP200, TXNL4A, SNRNP40, SNRPB, SNRPD1, SNRPD2, SNRPD3, SNRPE, SNRPF, SNRPG, DDX23, CD2BP2, PPIH, SNU13, EFTUD2, SART1 and USP39, plus LSM2, LSM3, LSM4, LSM5, LSM6, LSM7 and LSM8. Component of the U7 snRNP complex, or U7 Sm protein core complex, that is composed of the U7 snRNA and at least LSM10, LSM11, SNRPB, SNRPD3, SNRPE, SNRPF and SNRPG; the complex does not contain SNRPD1 and SNRPD2. Component of the minor spliceosome, which splices U12-type introns. Part of the SMN-Sm complex that contains SMN1, GEMIN2/SIP1, DDX20/GEMIN3, GEMIN4, GEMIN5, GEMIN6, GEMIN7, GEMIN8, STRAP/UNRIP and the Sm proteins SNRPB, SNRPD1, SNRPD2, SNRPD3, SNRPE, SNRPF and SNRPG; catalyzes core snRNPs assembly. Forms a 6S pICln-Sm complex composed of CLNS1A/pICln, SNRPD1, SNRPD2, SNRPE, SNRPF and SNRPG; ring-like structure where CLNS1A/pICln mimics additional Sm proteins and which is unable to assemble into the core snRNP. Interacts with SMN1; the interaction is direct. Interacts with GEMIN2 (via N-terminus); the interaction is direct. Interacts with SNRPF; the interaction is direct. Interacts with SNRPG; the interaction is direct.

The protein localises to the cytoplasm. The protein resides in the cytosol. Its subcellular location is the nucleus. Functionally, plays a role in pre-mRNA splicing as a core component of the spliceosomal U1, U2, U4 and U5 small nuclear ribonucleoproteins (snRNPs), the building blocks of the spliceosome. Component of both the pre-catalytic spliceosome B complex and activated spliceosome C complexes. As a component of the minor spliceosome, involved in the splicing of U12-type introns in pre-mRNAs. As part of the U7 snRNP it is involved in histone 3'-end processing. The chain is Small nuclear ribonucleoprotein E (SNRPE) from Sus scrofa (Pig).